The sequence spans 410 residues: LIMR family protein SELMODRAFT_432208 (410 aa).

5 helical membrane-spanning segments follow: residues 30–50 (LWWAVYIIDTVLVIPFAIFFY), 67–87 (LWVVILLTVFCLLLGILYAVI), 129–149 (VTLMVSLFFYIFPFFIDLTTL), 156–176 (ICLDLWLKLSVTYVITLNTII), and 179–199 (ILFMMFGGVGMATLPLSLIFA). A coiled-coil region spans residues 245-274 (RMFRKNVKKVQQELVFLEDDVEALNEAFPQ). The next 2 helical transmembrane spans lie at 288-308 (LVFGIVGLALSIIWLLHIIVF) and 330-350 (GGLLGTTTFAIFCYYLVMSVI). A compositionally biased stretch (low complexity) spans 389-400 (PSSAMDSSSWSA). Residues 389 to 410 (PSSAMDSSSWSADRPCRPWPWP) form a disordered region.

The protein belongs to the LIMR family.

Its subcellular location is the membrane. The sequence is that of LIMR family protein SELMODRAFT_432208 from Selaginella moellendorffii (Spikemoss).